The sequence spans 369 residues: Fructose-bisphosphate aldolase (369 aa).

Asp40 provides a ligand contact to dihydroxyacetone phosphate. 2 residues coordinate D-glyceraldehyde 3-phosphate: Ser42 and Thr45. Residue Arg49 participates in beta-D-fructose 1,6-bisphosphate binding. Lys113 contacts D-glyceraldehyde 3-phosphate. A dihydroxyacetone phosphate-binding site is contributed by Lys152. Position 195 (Glu195) interacts with D-glyceraldehyde 3-phosphate. Glu195 functions as the Proton acceptor in the catalytic mechanism. Residues Lys237, Ser279, and Gly280 each coordinate dihydroxyacetone phosphate. Lys237 (schiff-base intermediate with dihydroxyacetone phosphate) is an active-site residue. Residues Ser279 to Gly281 and Ser307 contribute to the beta-D-fructose 1,6-bisphosphate site. Dihydroxyacetone phosphate is bound by residues Gly309 and Arg310. Position 310 (Arg310) interacts with beta-D-fructose 1,6-bisphosphate.

The protein belongs to the class I fructose-bisphosphate aldolase family. Homotetramer. Interacts with TRAP (via cytoplasmic domain); the interaction prevents substrate binding and thereby inhibits aldolase activity. Interacts with MTRAP (via cytoplasmic domain); MTRAP phosphorylation may increase the binding to FBPA. Interact with RH1 (via cytoplasmic domain). Interacts with RH2b (via cytoplasmic domain). Interacts with RH4 (via cytoplasmic domain). Interacts with AMA1 (via cytoplasmic domain); the interaction is weak, however it may be increased upon AMA1 phosphorylation. Interacts with EBA140 (via cytoplasmic domain); the interaction is weak. Interacts with EBA175 (via cytoplasmic domain); the interaction is weak. Interacts with EBA181 (via cytoplasmic domain); the interaction is weak. Interacts with G-actin and F-actin. May interact with ACT2/actin II; the interaction inhibits FBPA catalytic activity. Interacts with human SLC4A1/band 3 (via N-terminus); the interaction inhibits FBPA catalytic activity.

It localises to the cytoplasm. Its subcellular location is the membrane. It is found in the host cell membrane. The enzyme catalyses beta-D-fructose 1,6-bisphosphate = D-glyceraldehyde 3-phosphate + dihydroxyacetone phosphate. It participates in carbohydrate degradation; glycolysis; D-glyceraldehyde 3-phosphate and glycerone phosphate from D-glucose: step 4/4. The cytoplasmic tail of TRAP and probably other adhesins acts as a competitive inhibitor as the binding sites of the glycolytic substrate fructose 1,6-bisphosphate and TRAP partially overlap. Functionally, plays a key role in glycolysis by catalyzing the cleavage of fructose 1,6-bisphosphate into dihydroxyacetone phosphate and glyceraldehyde 3-phosphate. Independently of its catalytic activity, connects the actin filaments, and thus the actomyosin motor, to cell surface adhesins of the thrombospondin-related anonymous protein (TRAP), the erythrocyte binding ligand (EBL) and reticulocyte binding homolog (RH) protein families; this interaction is probably involved in transducing the motor force across the parasite surface required for sporozoite and ookinete gliding motility and merozoite invasion. Stimulates actin polymerisation. The sequence is that of Fructose-bisphosphate aldolase from Plasmodium falciparum (isolate 3D7).